The sequence spans 460 residues: ESX-1 secretion-associated protein EspB (460 aa).

3 disordered regions span residues 92–116 (LDND…SAEL), 303–335 (PSDG…PADT), and 405–441 (LGGG…TEDR).

In terms of processing, cleaved in the C-terminal region by MycP1.

The protein resides in the secreted. The polypeptide is ESX-1 secretion-associated protein EspB (Mycobacterium tuberculosis (strain CDC 1551 / Oshkosh)).